The sequence spans 63 residues: Antimicrobial peptide 2 (63 aa).

Residues 1–27 form the signal peptide; the sequence is MAKVPIAFLKFVIVLILFIAMSGMIEA. Cystine bridges form between C28-C45, C35-C49, and C44-C60.

It belongs to the AMP family. Homodimer. In terms of tissue distribution, seed specific.

It is found in the secreted. Its function is as follows. Possesses antifungal activity and is also active on two tested Gram-positive bacteria but is non-toxic for Gram-negative bacteria and cultured human cells. This is Antimicrobial peptide 2 (AMP2) from Mirabilis jalapa (Garden four-o'clock).